The primary structure comprises 428 residues: Dihydroorotase (428 aa).

Positions 61 and 63 each coordinate Zn(2+). Substrate is bound by residues 63–65 (HLR) and Asn95. Zn(2+) is bound by residues Asp153, His180, and His233. Substrate is bound at residue Asn279. Asp306 lines the Zn(2+) pocket. Asp306 is a catalytic residue. Substrate contacts are provided by residues His310 and 324-325 (FG).

It belongs to the metallo-dependent hydrolases superfamily. DHOase family. Class I DHOase subfamily. Zn(2+) serves as cofactor.

The catalysed reaction is (S)-dihydroorotate + H2O = N-carbamoyl-L-aspartate + H(+). Its pathway is pyrimidine metabolism; UMP biosynthesis via de novo pathway; (S)-dihydroorotate from bicarbonate: step 3/3. Its function is as follows. Catalyzes the reversible cyclization of carbamoyl aspartate to dihydroorotate. This Geobacillus kaustophilus (strain HTA426) protein is Dihydroorotase.